Here is a 187-residue protein sequence, read N- to C-terminus: Dihydrofolate reductase (187 aa).

In terms of domain architecture, DHFR spans 4–185; it reads PLNCIVAVSQ…IKYKFEVYEK (182 aa). NADP(+) is bound by residues A10 and 16 to 22; that span reads GIGKNGD. 31 to 36 contacts substrate; sequence EFKYFQ. Residue K33 is modified to N6-acetyllysine; alternate. Position 33 is an N6-succinyllysine; alternate (K33). Position 55–57 (55–57) interacts with NADP(+); that stretch reads RKT. Residue R71 participates in substrate binding. NADP(+) is bound by residues 77 to 79 and 117 to 124; these read SRE and GGSSVYQE.

The protein belongs to the dihydrofolate reductase family. In terms of assembly, homodimer.

Its subcellular location is the mitochondrion. The protein resides in the cytoplasm. The enzyme catalyses (6S)-5,6,7,8-tetrahydrofolate + NADP(+) = 7,8-dihydrofolate + NADPH + H(+). Its pathway is cofactor biosynthesis; tetrahydrofolate biosynthesis; 5,6,7,8-tetrahydrofolate from 7,8-dihydrofolate: step 1/1. Its function is as follows. Key enzyme in folate metabolism. Contributes to the de novo mitochondrial thymidylate biosynthesis pathway. Catalyzes an essential reaction for de novo glycine and purine synthesis, and for DNA precursor synthesis. Binds its own mRNA. The sequence is that of Dihydrofolate reductase (Dhfr) from Rattus norvegicus (Rat).